Reading from the N-terminus, the 981-residue chain is Alpha-mannosidase (981 aa).

His-23, Asp-25, and Asp-145 together coordinate Zn(2+). The active-site Nucleophile is Asp-145. Asn-312 is a glycosylation site (N-linked (GlcNAc...) asparagine). His-386 is a Zn(2+) binding site. Intrachain disulfides connect Cys-422–Cys-432, Cys-442–Cys-450, and Cys-800–Cys-807. A glycan (N-linked (GlcNAc...) asparagine) is linked at Asn-446. Positions 938–957 (KKMKWSVEGDNEQEPQAVRG) are disordered.

Belongs to the glycosyl hydrolase 38 family. In terms of assembly, dimer of dimers of heavy and light subunits. It depends on Zn(2+) as a cofactor. Produced as a precursor which is then proteolytically cleaved into a 66kD heavy subunit and a 44kD light subunit. Cleavage probably occurs in protein bodies/protein storage vacuoles.

The protein resides in the protein storage vacuole. The catalysed reaction is Hydrolysis of terminal, non-reducing alpha-D-mannose residues in alpha-D-mannosides.. With respect to regulation, inhibited by 2,3,4,6-tetra-O-acetyl-5-fluoro-beta-L-gulopyranosyl fluoride which acts as a slow substrate, doubling as a competitive inhibitor as it forms a high steady state concentration of glycosyl-enzyme intermediate that blocks the active site. Inhibited by 2,3,4,6-tetra-O-acetyl-5-fluoro-alpha-D-mannopyranosyl fluoride which also acts as a slow substrate but no intermediates accumulate. Inhibited by EDTA. Inhibited by metal ion Cu(2+). Inhibited by metal ions Fe(2+), Cd(2+) and Co(2+). Inhibited by metal ions Ag(+) and Hg(2+). Competitively inhibited by mannono-1-4-lactone and mannono-1-5-lactone. Inhibited by swainsonine but not by 1-desoxymannojirimycin. Inhibited by pyrrolidine-3,4-diol derivatives. Liberates mannose from p-nitrophenyl-alpha-D-mannoside. Liberates mannose from further alpha-D-mannosides including methyl-, benzyl-alpha-D-mannoside, 1-6-linked di-, tri- and tetrasaccharides of alpha-D-mannose and mannosyl-rhamnose. Liberates mannose from various glycoproteins like ovalbumin and ovomucoid. Does not hydrolyze beta-D-mannosides. Has glycosyltransferase activity, forming disaccharides from mannose and lyxose but not from glucose, galactose, ribose, xylose or arabinose. In Canavalia ensiformis (Jack bean), this protein is Alpha-mannosidase.